We begin with the raw amino-acid sequence, 238 residues long: 1-(5-phosphoribosyl)-5-[(5-phosphoribosylamino)methylideneamino] imidazole-4-carboxamide isomerase (238 aa).

Residue Asp-7 is the Proton acceptor of the active site. Asp-129 serves as the catalytic Proton donor.

It belongs to the HisA/HisF family.

The protein resides in the cytoplasm. The enzyme catalyses 1-(5-phospho-beta-D-ribosyl)-5-[(5-phospho-beta-D-ribosylamino)methylideneamino]imidazole-4-carboxamide = 5-[(5-phospho-1-deoxy-D-ribulos-1-ylimino)methylamino]-1-(5-phospho-beta-D-ribosyl)imidazole-4-carboxamide. It functions in the pathway amino-acid biosynthesis; L-histidine biosynthesis; L-histidine from 5-phospho-alpha-D-ribose 1-diphosphate: step 4/9. This chain is 1-(5-phosphoribosyl)-5-[(5-phosphoribosylamino)methylideneamino] imidazole-4-carboxamide isomerase, found in Leuconostoc mesenteroides subsp. mesenteroides (strain ATCC 8293 / DSM 20343 / BCRC 11652 / CCM 1803 / JCM 6124 / NCDO 523 / NBRC 100496 / NCIMB 8023 / NCTC 12954 / NRRL B-1118 / 37Y).